The following is a 459-amino-acid chain: Ribulose bisphosphate carboxylase large chain (459 aa).

Lys-4 is modified (N6,N6,N6-trimethyllysine). The substrate site is built by Asn-113 and Thr-163. The active-site Proton acceptor is the Lys-165. Lys-167 provides a ligand contact to substrate. Mg(2+)-binding residues include Lys-191, Asp-193, and Glu-194. Lys-191 carries the post-translational modification N6-carboxylysine. His-284 functions as the Proton acceptor in the catalytic mechanism. Substrate-binding residues include Arg-285, His-317, and Ser-369.

This sequence belongs to the RuBisCO large chain family. Type I subfamily. In terms of assembly, heterohexadecamer of 8 large chains and 8 small chains; disulfide-linked. The disulfide link is formed within the large subunit homodimers. It depends on Mg(2+) as a cofactor. Post-translationally, the disulfide bond which can form in the large chain dimeric partners within the hexadecamer appears to be associated with oxidative stress and protein turnover.

It is found in the plastid. The protein localises to the chloroplast. It carries out the reaction 2 (2R)-3-phosphoglycerate + 2 H(+) = D-ribulose 1,5-bisphosphate + CO2 + H2O. The enzyme catalyses D-ribulose 1,5-bisphosphate + O2 = 2-phosphoglycolate + (2R)-3-phosphoglycerate + 2 H(+). RuBisCO catalyzes two reactions: the carboxylation of D-ribulose 1,5-bisphosphate, the primary event in carbon dioxide fixation, as well as the oxidative fragmentation of the pentose substrate in the photorespiration process. Both reactions occur simultaneously and in competition at the same active site. The protein is Ribulose bisphosphate carboxylase large chain of Heuchera micrantha (Alum root).